The following is a 455-amino-acid chain: Alpha-1,3/1,6-mannosyltransferase ALG2 (455 aa).

Residues 73 to 95 form a helical membrane-spanning segment; that stretch reads FGRFYILCAILRQFVLVASLILW. N138 carries an N-linked (GlcNAc...) asparagine glycan. Residues 434 to 453 form a helical membrane-spanning segment; it reads GAVYLLGAIGVLFACIIYCI.

Belongs to the glycosyltransferase group 1 family. Glycosyltransferase 4 subfamily.

Its subcellular location is the endoplasmic reticulum membrane. It catalyses the reaction a beta-D-Man-(1-&gt;4)-beta-D-GlcNAc-(1-&gt;4)-alpha-D-GlcNAc-diphospho-di-trans,poly-cis-dolichol + GDP-alpha-D-mannose = an alpha-D-Man-(1-&gt;3)-beta-D-Man-(1-&gt;4)-beta-D-GlcNAc-(1-&gt;4)-alpha-D-GlcNAc-diphospho-di-trans,poly-cis-dolichol + GDP + H(+). The catalysed reaction is an alpha-D-Man-(1-&gt;3)-beta-D-Man-(1-&gt;4)-beta-D-GlcNAc-(1-&gt;4)-alpha-D-GlcNAc-diphospho-di-trans,poly-cis-dolichol + GDP-alpha-D-mannose = an alpha-D-Man-(1-&gt;3)-[alpha-D-Man-(1-&gt;6)]-beta-D-Man-(1-&gt;4)-beta-D-GlcNAc-(1-&gt;4)-alpha-D-GlcNAc-diphospho-di-trans,poly-cis-dolichol + GDP + H(+). It functions in the pathway protein modification; protein glycosylation. Mannosylates Man(2)GlcNAc(2)-dolichol diphosphate and Man(1)GlcNAc(2)-dolichol diphosphate to form Man(3)GlcNAc(2)-dolichol diphosphate. The polypeptide is Alpha-1,3/1,6-mannosyltransferase ALG2 (ALG2) (Rhizomucor pusillus).